The following is a 524-amino-acid chain: Translation initiation factor eIF2B subunit delta (524 aa).

The interval 1–173 (MATAAVAVRE…ERQQVPTRKD (173 aa)) is disordered. Ala2 bears the N-acetylalanine mark. The residue at position 12 (Ser12) is a Phosphoserine. A compositionally biased stretch (basic and acidic residues) spans 26–40 (AEGREMTQEEKLQLR). The span at 41-51 (KEKKQQKKKRK) shows a compositional bias: basic residues. At Thr86 the chain carries Phosphothreonine. 2 stretches are compositionally biased toward basic and acidic residues: residues 87-121 (AKEK…RKGD) and 161-173 (KKPE…TRKD). Residues 171-180 (RKDYGSKVSL) are may bind the chemical integrated stress response (ISR) inhibitor ISRIB.

Belongs to the eIF-2B alpha/beta/delta subunits family. Component of the translation initiation factor 2B (eIF2B) complex which is a heterodecamer of two sets of five different subunits: alpha, beta, gamma, delta and epsilon. Subunits alpha, beta and delta comprise a regulatory subcomplex and subunits epsilon and gamma comprise a catalytic subcomplex. Within the complex, the hexameric regulatory complex resides at the center, with the two heterodimeric catalytic subcomplexes bound on opposite sides.

Its subcellular location is the cytoplasm. It is found in the cytosol. Its activity is regulated as follows. Activated by the chemical integrated stress response (ISR) inhibitor ISRIB which stimulates guanine nucleotide exchange factor activity for both phosphorylated and unphosphorylated eIF2. In terms of biological role, acts as a component of the translation initiation factor 2B (eIF2B) complex, which catalyzes the exchange of GDP for GTP on eukaryotic initiation factor 2 (eIF2) gamma subunit. Its guanine nucleotide exchange factor activity is repressed when bound to eIF2 complex phosphorylated on the alpha subunit, thereby limiting the amount of methionyl-initiator methionine tRNA available to the ribosome and consequently global translation is repressed. This Bos taurus (Bovine) protein is Translation initiation factor eIF2B subunit delta (EIF2B4).